The primary structure comprises 226 residues: Lipoprotein-releasing system ATP-binding protein LolD 1 (226 aa).

The ABC transporter domain maps to 6 to 226; sequence LRLDKVTRSF…TLREGKVVAA (221 aa). ATP is bound at residue 42-49; it reads GPSGAGKS.

The protein belongs to the ABC transporter superfamily. Lipoprotein translocase (TC 3.A.1.125) family. As to quaternary structure, the complex is composed of two ATP-binding proteins (LolD) and two transmembrane proteins (LolC and LolE).

The protein localises to the cell inner membrane. In terms of biological role, part of the ABC transporter complex LolCDE involved in the translocation of mature outer membrane-directed lipoproteins, from the inner membrane to the periplasmic chaperone, LolA. Responsible for the formation of the LolA-lipoprotein complex in an ATP-dependent manner. This is Lipoprotein-releasing system ATP-binding protein LolD 1 from Rhodospirillum rubrum (strain ATCC 11170 / ATH 1.1.1 / DSM 467 / LMG 4362 / NCIMB 8255 / S1).